The primary structure comprises 285 residues: Bifunctional protein FolD (285 aa).

Residues 166-168 (GAS) and I232 each bind NADP(+).

The protein belongs to the tetrahydrofolate dehydrogenase/cyclohydrolase family. As to quaternary structure, homodimer.

The enzyme catalyses (6R)-5,10-methylene-5,6,7,8-tetrahydrofolate + NADP(+) = (6R)-5,10-methenyltetrahydrofolate + NADPH. It catalyses the reaction (6R)-5,10-methenyltetrahydrofolate + H2O = (6R)-10-formyltetrahydrofolate + H(+). Its pathway is one-carbon metabolism; tetrahydrofolate interconversion. Catalyzes the oxidation of 5,10-methylenetetrahydrofolate to 5,10-methenyltetrahydrofolate and then the hydrolysis of 5,10-methenyltetrahydrofolate to 10-formyltetrahydrofolate. The chain is Bifunctional protein FolD from Psychromonas ingrahamii (strain DSM 17664 / CCUG 51855 / 37).